The chain runs to 478 residues: MATTLFRLAGRNAKRHCMRQSTTIAHNLNSTRAFSASALRRYAEPSYEGQGTRLVPTGDDFAPNNDLYGLEALKADGAPRVPPQDHILARKVRHYTVNFGPQHPAAHGVLRLILELKGEEIVRADPHVGLLHRGTEKLCEYRTYLQALPYFDRLDYVSMMTNEQCFALAVEKLLNVEIPERAKWIRTMFAEITRILNHLMSVLSHAMDVGALTPFLWGFEEREKLMEFYERVSGARLHAAYVRPGGVHQDIPLGLLDDIYMWATQFGDRIDETEEMLTDNRIWIDRLRGIGVVSAADALNLSFTGVMLRGSGVPWDIRKSQPYDAYDQVEFDVPVGINGDCYDRYLCRMEEFRQSLRIIHQCLNKMPAGPVRVEDYKISPPPRSAMKENMEALIHHFLLYTKGYAVPPGDTYSAIEAPKGEMGVYVVSDGSERPYRVHIRAPGFAHLGGFDHLSRGHMLADAVAVIGTMDLVFGEVDR.

A mitochondrion-targeting transit peptide spans 1–42; it reads MATTLFRLAGRNAKRHCMRQSTTIAHNLNSTRAFSASALRRY. Residues cysteine 341, cysteine 347, and cysteine 362 each contribute to the [4Fe-4S] cluster site.

This sequence belongs to the complex I 49 kDa subunit family. In terms of assembly, complex I is composed of about 40 different subunits. [4Fe-4S] cluster serves as cofactor.

It localises to the mitochondrion inner membrane. It catalyses the reaction a ubiquinone + NADH + 5 H(+)(in) = a ubiquinol + NAD(+) + 4 H(+)(out). In terms of biological role, core subunit of the mitochondrial membrane respiratory chain NADH dehydrogenase (Complex I) that is believed to belong to the minimal assembly required for catalysis. Complex I functions in the transfer of electrons from NADH to the respiratory chain. The immediate electron acceptor for the enzyme is believed to be ubiquinone. This chain is NADH-ubiquinone oxidoreductase 49 kDa subunit, mitochondrial (nuo-49), found in Neurospora crassa (strain ATCC 24698 / 74-OR23-1A / CBS 708.71 / DSM 1257 / FGSC 987).